Consider the following 712-residue polypeptide: Cyclolysin secretion/processing ATP-binding protein CyaB (712 aa).

The Peptidase C39 domain occupies 7–128; that stretch reads QCASVPDSGL…ALWAGELLLC (122 aa). Residues 157-439 form the ABC transmembrane type-1 domain; the sequence is IGEVLLISLV…LAQLWNDFQQ (283 aa). Helical transmembrane passes span 160–180, 194–214, 272–292, 298–318, 367–387, and 390–410; these read VLLISLVLQFIALLTPLFFQV, LNVIAVGFLAAILFEALLTGI, AVTVLLDVVFSVVFIAVMFFY, LVVLAALPCYFLLSLVLTPVL, VAAGLSVANVAMLANTGVTLI, and LVALGVLWVGATEVVAQRMTV. In terms of domain architecture, ABC transporter spans 471 to 706; that stretch reads IELDRVSFRY…GGLYARLQAL (236 aa). Residue 505–512 participates in ATP binding; it reads GRSGSGKS.

It belongs to the ABC transporter superfamily. Cyclolysin exporter (TC 3.A.1.109.2) family.

The protein resides in the cell membrane. Involved in the export of calmodulin-sensitive adenylate cyclase-hemolysin (cyclolysin). The protein is Cyclolysin secretion/processing ATP-binding protein CyaB (cyaB) of Bordetella pertussis (strain Tohama I / ATCC BAA-589 / NCTC 13251).